Consider the following 440-residue polypeptide: Gap junction alpha-8 protein (440 aa).

An intramembrane segment occupies 2 to 12; sequence GDWSFLGNILE. At 13 to 21 the chain is on the cytoplasmic side; sequence EVNEHSTVI. A helical membrane pass occupies residues 22–42; that stretch reads GRVWLTVLFIFRILILGTAAE. At 43 to 71 the chain is on the extracellular side; that stretch reads FVWGDEQSDFVCNTQQPGCENVCYDEAFP. 3 cysteine pairs are disulfide-bonded: cysteine 54–cysteine 201, cysteine 61–cysteine 195, and cysteine 65–cysteine 190. Residues 72–92 traverse the membrane as a helical segment; the sequence is ISHIRLWVLQIIFVSTPSLMY. At 93 to 161 the chain is on the cytoplasmic side; sequence VGHAVHHVRM…GTLLRTYVCH (69 aa). The interval 111–143 is disordered; the sequence is AEELCQQSRSNGGERVPIAPDQASIRKSSSSSK. The chain crosses the membrane as a helical span at residues 162 to 182; it reads IIFKTLFEVGFIVGHYFLYGF. The Extracellular portion of the chain corresponds to 183-210; the sequence is RILPLYRCSRWPCPNVVDCFVSRPTEKT. The helical transmembrane segment at 211–231 threads the bilayer; it reads IFILFMLSVAFVSLFLNIMEM. At 232–440 the chain is on the cytoplasmic side; that stretch reads SHLGMKGIRS…SRARSDDLTI (209 aa). The disordered stretch occupies residues 334–440; that stretch reads GAQEVEREEQ…SRARSDDLTI (107 aa). Composition is skewed to basic and acidic residues over residues 353–364 and 375–399; these read VGEKKQEAEKVA and DGEKVETPGVGKDDEKEELQAEKVT. The span at 423–432 shows a compositional bias: low complexity; it reads LSRLSKASSR.

It belongs to the connexin family. Alpha-type (group II) subfamily. As to quaternary structure, a hemichannel or connexon is composed of a hexamer of connexins. A functional gap junction is formed by the apposition of two hemichannels. Forms heteromeric channels with GJA3. As to expression, detected in eye lens (at protein level).

It is found in the cell membrane. It localises to the cell junction. The protein resides in the gap junction. Functionally, structural component of eye lens gap junctions. Gap junctions are dodecameric channels that connect the cytoplasm of adjoining cells. They are formed by the docking of two hexameric hemichannels, one from each cell membrane. Small molecules and ions diffuse from one cell to a neighboring cell via the central pore. The sequence is that of Gap junction alpha-8 protein (Gja8) from Rattus norvegicus (Rat).